Reading from the N-terminus, the 149-residue chain is Small ribosomal subunit protein uS13 (149 aa).

Positions 118–149 (GRRHELGLPVRGQRTKSTFRKGSSVGVRRKKR) are disordered.

This sequence belongs to the universal ribosomal protein uS13 family. Part of the 30S ribosomal subunit. Forms a loose heterodimer with protein S19. Forms two bridges to the 50S subunit in the 70S ribosome.

Located at the top of the head of the 30S subunit, it contacts several helices of the 16S rRNA. In the 70S ribosome it contacts the 23S rRNA (bridge B1a) and protein L5 of the 50S subunit (bridge B1b), connecting the 2 subunits; these bridges are implicated in subunit movement. The protein is Small ribosomal subunit protein uS13 of Methanothermobacter thermautotrophicus (strain ATCC 29096 / DSM 1053 / JCM 10044 / NBRC 100330 / Delta H) (Methanobacterium thermoautotrophicum).